A 924-amino-acid chain; its full sequence is LPS-assembly protein LptD (924 aa).

Positions 1–33 (MAVKSLVFRRKFPLLVTGSLLALQPVAALTVQA) are cleaved as a signal peptide. The interval 58-102 (NLPPRPAHTATSVSTAAAGSSVSGSGGETVEAEPTQRLVTESGGR) is disordered. Low complexity predominate over residues 66–90 (TATSVSTAAAGSSVSGSGGETVEAE).

This sequence belongs to the LptD family. In terms of assembly, component of the lipopolysaccharide transport and assembly complex. Interacts with LptE and LptA.

The protein resides in the cell outer membrane. Its function is as follows. Together with LptE, is involved in the assembly of lipopolysaccharide (LPS) at the surface of the outer membrane. In Pseudomonas aeruginosa (strain UCBPP-PA14), this protein is LPS-assembly protein LptD.